Here is a 208-residue protein sequence, read N- to C-terminus: Small ribosomal subunit protein uS4 (208 aa).

Residues 30–49 (EKRPYAPGEHGRDRRRTESD) form a disordered region. An S4 RNA-binding domain is found at 95–161 (TRLDNLVLRA…VPFQIAAEGV (67 aa)).

It belongs to the universal ribosomal protein uS4 family. Part of the 30S ribosomal subunit. Contacts protein S5. The interaction surface between S4 and S5 is involved in control of translational fidelity.

Its function is as follows. One of the primary rRNA binding proteins, it binds directly to 16S rRNA where it nucleates assembly of the body of the 30S subunit. With S5 and S12 plays an important role in translational accuracy. This is Small ribosomal subunit protein uS4 from Bifidobacterium longum (strain DJO10A).